Here is a 211-residue protein sequence, read N- to C-terminus: Histidine biosynthesis bifunctional protein HisIE (211 aa).

The phosphoribosyl-AMP cyclohydrolase stretch occupies residues 1 to 118 (MNVDDLTFDD…IYGASDRFGI (118 aa)). Residues 119 to 211 (IATLEALIAE…LEERHRPKEE (93 aa)) form a phosphoribosyl-ATP pyrophosphohydrolase region.

The protein in the N-terminal section; belongs to the PRA-CH family. This sequence in the C-terminal section; belongs to the PRA-PH family.

The protein localises to the cytoplasm. The enzyme catalyses 1-(5-phospho-beta-D-ribosyl)-ATP + H2O = 1-(5-phospho-beta-D-ribosyl)-5'-AMP + diphosphate + H(+). It carries out the reaction 1-(5-phospho-beta-D-ribosyl)-5'-AMP + H2O = 1-(5-phospho-beta-D-ribosyl)-5-[(5-phospho-beta-D-ribosylamino)methylideneamino]imidazole-4-carboxamide. Its pathway is amino-acid biosynthesis; L-histidine biosynthesis; L-histidine from 5-phospho-alpha-D-ribose 1-diphosphate: step 2/9. The protein operates within amino-acid biosynthesis; L-histidine biosynthesis; L-histidine from 5-phospho-alpha-D-ribose 1-diphosphate: step 3/9. This Halalkalibacterium halodurans (strain ATCC BAA-125 / DSM 18197 / FERM 7344 / JCM 9153 / C-125) (Bacillus halodurans) protein is Histidine biosynthesis bifunctional protein HisIE (hisI).